Consider the following 70-residue polypeptide: NAD(P)H-quinone oxidoreductase subunit O (70 aa).

The protein belongs to the complex I NdhO subunit family. As to quaternary structure, NDH-1 can be composed of about 15 different subunits; different subcomplexes with different compositions have been identified which probably have different functions.

It is found in the cellular thylakoid membrane. It catalyses the reaction a plastoquinone + NADH + (n+1) H(+)(in) = a plastoquinol + NAD(+) + n H(+)(out). The enzyme catalyses a plastoquinone + NADPH + (n+1) H(+)(in) = a plastoquinol + NADP(+) + n H(+)(out). Its function is as follows. NDH-1 shuttles electrons from an unknown electron donor, via FMN and iron-sulfur (Fe-S) centers, to quinones in the respiratory and/or the photosynthetic chain. The immediate electron acceptor for the enzyme in this species is believed to be plastoquinone. Couples the redox reaction to proton translocation, and thus conserves the redox energy in a proton gradient. Cyanobacterial NDH-1 also plays a role in inorganic carbon-concentration. The chain is NAD(P)H-quinone oxidoreductase subunit O from Trichormus variabilis (strain ATCC 29413 / PCC 7937) (Anabaena variabilis).